We begin with the raw amino-acid sequence, 90 residues long: MAVKIRLTRMGSKKKPFYRINVADSRAPRDGRFIETVGTYNPLVAENQVTIKEERVLEWLSKGAQPSDTVRNLLSKAGVMTKFHDQKFSK.

Belongs to the bacterial ribosomal protein bS16 family.

The chain is Small ribosomal subunit protein bS16 from Streptococcus agalactiae serotype III (strain NEM316).